A 352-amino-acid chain; its full sequence is Palmitoyltransferase PFA5 (352 aa).

Helical transmembrane passes span 12-32 and 53-73; these read YWTIYIVPLVVLLLMIYGTWA and IGLICTCCVLDALIIAIWVLI. In terms of domain architecture, DHHC spans 114-164; the sequence is VWCSNCQSLKVGRTKHSSHQGHCVPRFDHYCVWLGAVIGFKNYRLFVQFVF. Catalysis depends on Cys-144, which acts as the S-palmitoyl cysteine intermediate. Transmembrane regions (helical) follow at residues 159–179 and 195–215; these read FVQFVFYFAVLLMIVWITISV and LIVLLIISGIGWLMTSGLFVS.

It belongs to the DHHC palmitoyltransferase family. PFA5 subfamily.

The protein localises to the membrane. It catalyses the reaction L-cysteinyl-[protein] + hexadecanoyl-CoA = S-hexadecanoyl-L-cysteinyl-[protein] + CoA. In Candida glabrata (strain ATCC 2001 / BCRC 20586 / JCM 3761 / NBRC 0622 / NRRL Y-65 / CBS 138) (Yeast), this protein is Palmitoyltransferase PFA5 (PFA5).